We begin with the raw amino-acid sequence, 312 residues long: Zinc finger CCCH domain-containing protein 25 (312 aa).

The RRM domain maps to 36–114; that stretch reads AYVFVGGIPY…RIVRVDHVSK (79 aa). Residues 130–157 form a C3H1-type zinc finger; the sequence is REARGVCYAFQKGECNRGASCRYSHDEQ. Residues 153–312 form a disordered region; that stretch reads SHDEQRNANT…DSERYRKSRR (160 aa). Basic and acidic residues-rich tracts occupy residues 166 to 184, 197 to 210, and 219 to 312; these read SKEESKARWEHDRHHEPPM, RFPDRAKEENKSTG, and EAYK…KSRR.

This chain is Zinc finger CCCH domain-containing protein 25, found in Oryza sativa subsp. japonica (Rice).